We begin with the raw amino-acid sequence, 130 residues long: Small ribosomal subunit protein uS8 (130 aa).

The protein belongs to the universal ribosomal protein uS8 family. In terms of assembly, part of the 30S ribosomal subunit. Contacts proteins S5 and S12.

In terms of biological role, one of the primary rRNA binding proteins, it binds directly to 16S rRNA central domain where it helps coordinate assembly of the platform of the 30S subunit. The protein is Small ribosomal subunit protein uS8 of Erwinia tasmaniensis (strain DSM 17950 / CFBP 7177 / CIP 109463 / NCPPB 4357 / Et1/99).